Reading from the N-terminus, the 69-residue chain is U2-agatoxin-Ao1z (69 aa).

Residues 1–20 form the signal peptide; sequence MRAIISLLLISAMVFSMIEA. Residues 21–34 constitute a propeptide that is removed on maturation; that stretch reads VPVEEGLQLFEGER. 3 disulfides stabilise this stretch: cysteine 37/cysteine 53, cysteine 44/cysteine 58, and cysteine 52/cysteine 68.

It belongs to the neurotoxin 01 (U2-agtx) family. As to expression, expressed by the venom gland.

It localises to the secreted. Insect active toxin causing rapid but reversible paralysis in crickets. No activity shown in mammals. Does not show effect on mammalian voltage-gated calcium channels. This Agelena orientalis (Funnel-web spider) protein is U2-agatoxin-Ao1z.